Reading from the N-terminus, the 129-residue chain is Nif-specific regulatory protein (129 aa).

One can recognise a Sigma-54 factor interaction domain in the interval 1 to 46 (EFLLTKIGRQQGRPLTVTDSAIRLLMSHRWPGNVRDVENCLERSAI). The segment at residues 101–129 (QAKAARLLGMTPRQIAYRIQTLNIHMRKI) is a DNA-binding region (H-T-H motif).

As to quaternary structure, interacts with sigma-54.

Functionally, required for activation of most nif operons, which are directly involved in nitrogen fixation. This chain is Nif-specific regulatory protein (nifA), found in Azotobacter chroococcum mcd 1.